The primary structure comprises 284 residues: Bifunctional protein FolD 2 (284 aa).

NADP(+) is bound by residues 165–167, threonine 192, and valine 233; that span reads GRG.

This sequence belongs to the tetrahydrofolate dehydrogenase/cyclohydrolase family. In terms of assembly, homodimer.

It catalyses the reaction (6R)-5,10-methylene-5,6,7,8-tetrahydrofolate + NADP(+) = (6R)-5,10-methenyltetrahydrofolate + NADPH. The catalysed reaction is (6R)-5,10-methenyltetrahydrofolate + H2O = (6R)-10-formyltetrahydrofolate + H(+). It participates in one-carbon metabolism; tetrahydrofolate interconversion. Catalyzes the oxidation of 5,10-methylenetetrahydrofolate to 5,10-methenyltetrahydrofolate and then the hydrolysis of 5,10-methenyltetrahydrofolate to 10-formyltetrahydrofolate. The protein is Bifunctional protein FolD 2 of Streptomyces avermitilis (strain ATCC 31267 / DSM 46492 / JCM 5070 / NBRC 14893 / NCIMB 12804 / NRRL 8165 / MA-4680).